Here is a 127-residue protein sequence, read N- to C-terminus: Ribosome-binding factor A (127 aa).

It belongs to the RbfA family. Monomer. Binds 30S ribosomal subunits, but not 50S ribosomal subunits or 70S ribosomes.

The protein localises to the cytoplasm. Its function is as follows. One of several proteins that assist in the late maturation steps of the functional core of the 30S ribosomal subunit. Associates with free 30S ribosomal subunits (but not with 30S subunits that are part of 70S ribosomes or polysomes). Required for efficient processing of 16S rRNA. May interact with the 5'-terminal helix region of 16S rRNA. The polypeptide is Ribosome-binding factor A (Rickettsia typhi (strain ATCC VR-144 / Wilmington)).